We begin with the raw amino-acid sequence, 385 residues long: MAAVVAATALKGRGARNARVLRGILSGATANKASQNRSRALQSHSSPECKEEPEPLSPELEYIPRKRGKNPMKAVGLAWYSLYTRTRLGYLFYRQQLRRARNRYPKGHSRTQPRLFNGVKVLPIPVLSDNYSYLIIDTQARLAVAVDPSDPQAVQASIEKEGVNLVAILCTHKHWDHSGGNRDLSRRHQDCRVYGSPQDSIPYLTHPLCHQDVVSVGRLQIRALATPGHTQGHLVYLLDGEPYEGPSCLFSGDLLFLSGCGRTFEGTAETMLSSLDTVLGLGDDTLLWPGHEYAEENLGFAGVVEPENLARERKMQWVQRQRMERKSTCPSTLGEERSYNPFLRTHCLVLQEALGPSPGPTGDDGCSRAQLLERLRQLKDLHKSK.

Over residues 31 to 42 the composition is skewed to polar residues; it reads NKASQNRSRALQ. The interval 31–57 is disordered; that stretch reads NKASQNRSRALQSHSSPECKEEPEPLS. Zn(2+)-binding residues include H172, H174, D176, H177, H229, D253, and H291.

It belongs to the metallo-beta-lactamase superfamily. Glyoxalase II family. Zn(2+) is required as a cofactor. In terms of processing, undergoes cleavage at the N-terminus.

It localises to the cell membrane. Its subcellular location is the mitochondrion. The enzyme catalyses a thioester + H2O = a thiol + a carboxylate + H(+). Its function is as follows. Probable thioesterase that may play a role in cellular detoxification processes; it likely acts on a yet-unknown alpha-hydroxythioester substrate. In vitro, it is able to catalyze the hydrolysis of S-D-lactoyl-glutathione to form glutathione and D-lactic acid at very low rate, though this reaction is not physiologically relevant in vivo. This chain is Probable thioesterase PNKD (PNKD), found in Bos taurus (Bovine).